The primary structure comprises 417 residues: SNF1 protein kinase subunit beta-3 (417 aa).

Basic and acidic residues predominate over residues 1–12 (MAGDNPENKDAS). A disordered region spans residues 1–37 (MAGDNPENKDASMLDVSDAASNTTINGKHSADSTNEA). A phosphoserine mark is found at S12, S21, S44, and S135. Polar residues predominate over residues 19 to 37 (AASNTTINGKHSADSTNEA). Disordered regions lie at residues 64–155 (SSLI…VEGK) and 250–269 (GNEPQQHLAEKKANHVDDSK). Positions 118-136 (TGNTLQKMDYQPSQQPDSL) are enriched in polar residues. The span at 137–149 (QNQGFQQQQEQQQ) shows a compositional bias: low complexity. Positions 152 to 342 (VEGKKGRAMM…DQQQNNHQNM (191 aa)) are kinase-interacting sequence (KIS); required for interaction with SNF1. Residues 257–269 (LAEKKANHVDDSK) show a composition bias toward basic and acidic residues. Phosphoserine occurs at positions 276 and 279. An association with SNF1 kinase complex (ASC) domain; required for interaction with SNF4 region spans residues 343 to 417 (AWLTPPQLPP…VTQILYTPLQ (75 aa)).

It belongs to the 5'-AMP-activated protein kinase beta subunit family. As to quaternary structure, component of the SNF1 kinase complex, a heterotrimeric complex composed of the catalytic alpha subunit SNF1, one of the three related beta subunits SIP1, SIP2 or GAL83, and the regulatory gamma subunit SNF4. The beta subunit serves as a bridge between the catalytic and the regulatory subunit. Interacts (via KIS domain) with SNF1. Interacts (via ASC domain) with SNF4. Interacts with REE1. In terms of processing, phosphorylated by SNF1 in vitro.

It is found in the cytoplasm. It localises to the nucleus. Functionally, beta subunit of the SNF1 kinase complex, which is required for transcriptional, metabolic, and developmental adaptations in response to glucose limitation. Has a structural role, mediating heterotrimer formation, and a regulatory role, defining carbon source-regulated subcellular location and substrate specificity of the SNF1 kinase complex. Promotes the relocalization of the SNF1 kinase complex to the nucleus upon shift to nonfermentable carbon sources. This is SNF1 protein kinase subunit beta-3 (GAL83) from Saccharomyces cerevisiae (strain ATCC 204508 / S288c) (Baker's yeast).